The sequence spans 88 residues: Small ribosomal subunit protein uS17 (88 aa).

Belongs to the universal ribosomal protein uS17 family. As to quaternary structure, part of the 30S ribosomal subunit.

One of the primary rRNA binding proteins, it binds specifically to the 5'-end of 16S ribosomal RNA. The protein is Small ribosomal subunit protein uS17 of Ligilactobacillus salivarius (strain UCC118) (Lactobacillus salivarius).